Consider the following 502-residue polypeptide: MPRSSRMNLWPHCFPCFDDGDRSGNRFSTVCNFPDDLLPSLGATAHQPPKLRKYLVSPYDPRYKVWETFLIILVVYSAWICPLEFAFLRYLPSAPFVVDDVVNGFFAVDIMLTFFVPFVDKKSYLLVNDPKKIAVRYLSSWFVFDVCSTVPFHSISLLFNEHGHDLGFKFLNVLRLWRLRRVSSMFARLEKDIRFNYAVIRCTKLISVTLFAIHCAGCINYLIADRYPDPRRTWIGAVMPNFREDGLWIRYVTAMYWSITTLTTTGYGDLHAENAREMLFGICYMLFNLWLTAYLIGNMTNLVVHSTSRTRDFRDVVQAASEFAARNQLPQQIEEQMLNHICLRYKTDGLKQQETLDVLPKAMRSSISHYLFFRVVQGAYLFKGVSSRFIQQLVTEMQAEYFAPKEDIILQNDSPSDLYLLVSGAVDILVFLDGTEQVYRRAAEGELLGEIGVLCNKPQSFTFRTTKLSQILRISRTKLLGIIQENREDGDIIRSNLQQVNV.

Over 1 to 67 (MPRSSRMNLW…PYDPRYKVWE (67 aa)) the chain is Cytoplasmic. The helical transmembrane segment at 68-88 (TFLIILVVYSAWICPLEFAFL) threads the bilayer. The Extracellular portion of the chain corresponds to 89–95 (RYLPSAP). The helical transmembrane segment at 96–116 (FVVDDVVNGFFAVDIMLTFFV) threads the bilayer. Residues 117 to 138 (PFVDKKSYLLVNDPKKIAVRYL) lie on the Cytoplasmic side of the membrane. The chain crosses the membrane as a helical span at residues 139–159 (SSWFVFDVCSTVPFHSISLLF). Residues 160 to 169 (NEHGHDLGFK) are Extracellular-facing. The helical; Voltage-sensor transmembrane segment at 170 to 190 (FLNVLRLWRLRRVSSMFARLE) threads the bilayer. At 191–204 (KDIRFNYAVIRCTK) the chain is on the cytoplasmic side. A helical transmembrane segment spans residues 205–225 (LISVTLFAIHCAGCINYLIAD). Over 226-252 (RYPDPRRTWIGAVMPNFREDGLWIRYV) the chain is Extracellular. Positions 253-272 (TAMYWSITTLTTTGYGDLHA) form an intramembrane region, pore-forming. The Extracellular portion of the chain corresponds to 273 to 276 (ENAR). A helical transmembrane segment spans residues 277-297 (EMLFGICYMLFNLWLTAYLIG). At 298 to 502 (NMTNLVVHST…IRSNLQQVNV (205 aa)) the chain is on the cytoplasmic side. Residue 381–500 (LFKGVSSRFI…DIIRSNLQQV (120 aa)) coordinates a nucleoside 3',5'-cyclic phosphate.

This sequence belongs to the potassium channel family. Plant (TC 1.A.1.4) subfamily.

It localises to the membrane. Probable inward-rectifying potassium channel. Assuming opened or closed conformations in response to the voltage difference across the membrane, the channel is activated by hyperpolarization. This chain is Potassium channel KAT3, found in Oryza sativa subsp. japonica (Rice).